The chain runs to 286 residues: ATP synthase gamma chain (286 aa).

It belongs to the ATPase gamma chain family. As to quaternary structure, F-type ATPases have 2 components, CF(1) - the catalytic core - and CF(0) - the membrane proton channel. CF(1) has five subunits: alpha(3), beta(3), gamma(1), delta(1), epsilon(1). CF(0) has three main subunits: a, b and c.

It is found in the cell inner membrane. Its function is as follows. Produces ATP from ADP in the presence of a proton gradient across the membrane. The gamma chain is believed to be important in regulating ATPase activity and the flow of protons through the CF(0) complex. The protein is ATP synthase gamma chain of Shewanella sp. (strain MR-4).